A 78-amino-acid chain; its full sequence is NAD(P)H-quinone oxidoreductase subunit O (78 aa).

Belongs to the complex I NdhO subunit family. In terms of assembly, NDH-1 can be composed of about 15 different subunits; different subcomplexes with different compositions have been identified which probably have different functions.

The protein localises to the cellular thylakoid membrane. The enzyme catalyses a plastoquinone + NADH + (n+1) H(+)(in) = a plastoquinol + NAD(+) + n H(+)(out). It carries out the reaction a plastoquinone + NADPH + (n+1) H(+)(in) = a plastoquinol + NADP(+) + n H(+)(out). In terms of biological role, NDH-1 shuttles electrons from an unknown electron donor, via FMN and iron-sulfur (Fe-S) centers, to quinones in the respiratory and/or the photosynthetic chain. The immediate electron acceptor for the enzyme in this species is believed to be plastoquinone. Couples the redox reaction to proton translocation, and thus conserves the redox energy in a proton gradient. Cyanobacterial NDH-1 also plays a role in inorganic carbon-concentration. The protein is NAD(P)H-quinone oxidoreductase subunit O of Prochlorococcus marinus (strain MIT 9215).